A 347-amino-acid polypeptide reads, in one-letter code: NAD-dependent alcohol dehydrogenase (347 aa).

Lysine 11 carries the post-translational modification N6-methyllysine. Residues cysteine 38, histidine 68, glutamate 98, cysteine 101, cysteine 104, cysteine 112, and cysteine 154 each contribute to the Zn(2+) site. Lysine 213 carries the N6-methyllysine modification.

This sequence belongs to the zinc-containing alcohol dehydrogenase family. As to quaternary structure, homodimer and homotetramer. Requires Zn(2+) as cofactor.

The catalysed reaction is a primary alcohol + NAD(+) = an aldehyde + NADH + H(+). The enzyme catalyses a secondary alcohol + NAD(+) = a ketone + NADH + H(+). The polypeptide is NAD-dependent alcohol dehydrogenase (adh) (Sulfurisphaera tokodaii (strain DSM 16993 / JCM 10545 / NBRC 100140 / 7) (Sulfolobus tokodaii)).